A 535-amino-acid polypeptide reads, in one-letter code: Pentatricopeptide repeat-containing protein At5g16420, mitochondrial (535 aa).

Residues 1 to 28 constitute a mitochondrion transit peptide; the sequence is MFLSRVNPTRFPPFVASRRLFSASASAA. PPR repeat units lie at residues 82–112, 119–153, 154–189, 190–224, 225–259, 260–294, 295–329, 330–364, 365–395, 399–433, 434–468, and 469–503; these read NYDT…LRNS, GENL…GVKR, SVRS…GITP, NIFT…GLVP, NLVT…GWYP, DATT…EIEP, NEVT…SFMP, DSSL…NCMP, DNAL…FEKG, SLLT…KCKP, NAFT…GCFP, and NKTT…GKVD.

It belongs to the PPR family. P subfamily.

The protein resides in the mitochondrion. This Arabidopsis thaliana (Mouse-ear cress) protein is Pentatricopeptide repeat-containing protein At5g16420, mitochondrial.